The sequence spans 154 residues: Nuclear cap-binding protein subunit 2-A (154 aa).

MRNA-binding positions include tyrosine 10, tyrosine 33, 102-106 (RVDWD), 113-117 (RQYGR), and 123-124 (QV). The RRM domain occupies 30 to 108 (STLYVGNLSF…RLIRVDWDAG (79 aa)).

This sequence belongs to the RRM NCBP2 family. Component of the nuclear cap-binding complex (CBC), a heterodimer composed of Cbp80 and Cbp20 that interacts with m7GpppG-capped RNA. Interacts with Ars2.

It localises to the nucleus. Its function is as follows. Component of the cap-binding complex (CBC), which binds co-transcriptionally to the 5' cap of pre-mRNAs and is involved in various processes such as pre-mRNA splicing and RNA-mediated gene silencing (RNAi). The CBC complex is involved in miRNA-mediated RNA interference via its interaction with Ars2 and is required for primary microRNAs (miRNAs) processing. Also involved in innate immunity via the short interfering RNAs (siRNAs) processing machinery by restricting the viral RNA production. In the CBC complex, Cbp20 recognizes and binds capped RNAs (m7GpppG-capped RNA) but requires Cbp80 to stabilize the movement of its N-terminal loop and lock the CBC into a high affinity cap-binding state with the cap structure. This is Nuclear cap-binding protein subunit 2-A (Cbp20-A) from Drosophila virilis (Fruit fly).